The chain runs to 686 residues: Pentatricopeptide repeat-containing protein 1, mitochondrial (686 aa).

The span at 55-67 shows a compositional bias: polar residues; the sequence is RMSSLCSDSSTPV. Residues 55 to 79 are disordered; sequence RMSSLCSDSSTPVAPQEEEEEESFG. PPR repeat units follow at residues 124–160, 161–195, 196–234, 235–269, and 270–306; these read TPYW…RLQP, LECN…DLEP, SDAT…NFQL, NLKT…GHAV, and TEET…GIKP. A disordered region spans residues 383-407; sequence KLEGPPAFPEARETSRTQPEVETKA. Residues 392–407 are compositionally biased toward basic and acidic residues; sequence EARETSRTQPEVETKA. 2 PPR repeats span residues 508–542 and 575–609; these read DITF…GIVP and NTHI…SVPV.

This sequence belongs to the PTCD1 family. As to quaternary structure, associates with mitochondrial leucine tRNAs. Interacts with ELAC2.

The protein resides in the mitochondrion matrix. Its function is as follows. Mitochondrial protein implicated in negative regulation of leucine tRNA levels, as well as negative regulation of mitochondria-encoded proteins and COX activity. Also affects the 3'-processing of mitochondrial tRNAs. The sequence is that of Pentatricopeptide repeat-containing protein 1, mitochondrial (Ptcd1) from Rattus norvegicus (Rat).